The primary structure comprises 754 residues: MTILTHTLGFPRVGLRRELKKAQESYWAGNSTREALLAVGRELRARHWEQQKQAGIDLLPVGDFAWYDHVLTTSLLLGNVPARHQNNDGSMDIDTLFRIGRGRAPTGEPAAAAEMTKWFNTNYHYIVPEFSKGQQFRLTWTQLLEEVDEALALGHKIKPVLLGPVTYLWLGKVKGEPFDRLTLLKDILPVYQHVLAELAKRGIEWVQIDEPALVLELPQAWLDAFKPAYDALAGQVKLLLTTYFEGVTPNLDTIIALPVQGLHVDLIHGKDDVAELHQRLPVDWLLSAGLINGRNVWRADLTEKYAQINALVGKRALWVASSCSLLHSPIDLSVETRLDTEVKSWFAFALQKCGELALLRDALNSGETAALEEWSAPIQARRHSRRVHNAAVEKRLAAITAQDSQRENPYEVRAEAQRARFKLPAWPTTTIGSFPQTTEIRGLRLDFKKGNLDANNYRTGIAEHIKQAIIEQERLGLDVLVHGEAERNDMVEYFGEHLDGFVFTQNGWVQSYGSRCVKPPVVIGDISRPAPITVEWAKYAQSLTDKPVKGMLTGPVTILCWSFPREDVTRETIAKQIALALRDEVADLEAAGIGIIQIDEPALREGLPLRRSDWDAYLEWGVEAFRINAAVAKDETQIHTHMCYCEFNDIMDSIAALDADVITIETSRSDMELLESFEAFDYPNEIGPGVYDIHSPNVPSVEWIEALLKKAAQRIPAQRLWVNPDCGLKTRGWPETRAALANMVKAAHNLRQAK.

Residues 17-20 and Lys-117 contribute to the 5-methyltetrahydropteroyltri-L-glutamate site; that span reads RELK. L-homocysteine contacts are provided by residues 431 to 433 and Glu-484; that span reads IGS. Residues 431 to 433 and Glu-484 each bind L-methionine; that span reads IGS. 5-methyltetrahydropteroyltri-L-glutamate contacts are provided by residues 515-516 and Trp-561; that span reads RC. Asp-599 provides a ligand contact to L-homocysteine. Residue Asp-599 participates in L-methionine binding. Glu-605 lines the 5-methyltetrahydropteroyltri-L-glutamate pocket. The Zn(2+) site is built by His-641, Cys-643, and Glu-665. Residue His-694 is the Proton donor of the active site. Cys-726 serves as a coordination point for Zn(2+).

The protein belongs to the vitamin-B12 independent methionine synthase family. Requires Zn(2+) as cofactor.

The catalysed reaction is 5-methyltetrahydropteroyltri-L-glutamate + L-homocysteine = tetrahydropteroyltri-L-glutamate + L-methionine. It participates in amino-acid biosynthesis; L-methionine biosynthesis via de novo pathway; L-methionine from L-homocysteine (MetE route): step 1/1. Functionally, catalyzes the transfer of a methyl group from 5-methyltetrahydrofolate to homocysteine resulting in methionine formation. The polypeptide is 5-methyltetrahydropteroyltriglutamate--homocysteine methyltransferase (Salmonella choleraesuis (strain SC-B67)).